Consider the following 241-residue polypeptide: MRFPTPLVPARLLRRYKRFLSDAVLEDGTEITAHCPNPGAMLGLKDDGARIWLLPNDDPKKKLKYGWRLVELPDGHFAGIDAGLPNALVKEALAEGQIEALRGYSSIRPEQKYGDENSRIDFLLSEPGRPDAFVEVKNCHLRRESDWAEFPDCVTDRGAKHLRELTKIARSGGRAVMLYVVQRTDCARFRLAPDLDPAYARAFDAARDAGVEVLCHGTDITPEGITLTGPLPVDPSPQARD.

It belongs to the SfsA family.

This chain is Sugar fermentation stimulation protein homolog, found in Jannaschia sp. (strain CCS1).